A 678-amino-acid chain; its full sequence is Beta-catenin-like protein hmp-2 (678 aa).

ARM repeat units follow at residues 153–192 (RGGP…NLLM), 280–319 (PSNK…RNLS), 320–359 (DSAT…NLTC), 362–403 (TRNK…HCTA), and 409–448 (EEAQ…NSAL).

Belongs to the beta-catenin family. Component of a core catenin-cadherin complex consisting of hmr-1, hmp-1 and hmp-2; the complex localizes to adherens junctions. Interacts with hmr-1; the interaction is direct. May interact with hmp-1. Interacts with frk-1. In terms of tissue distribution, epidermal cells.

It is found in the cell junction. The protein localises to the adherens junction. Functionally, required for cell migration during body enclosure and cell shape changes during body elongation. Plays a role in recruitment of the cadherin protein hmr-1 to adherens junctions. This chain is Beta-catenin-like protein hmp-2 (hmp-2), found in Caenorhabditis elegans.